The primary structure comprises 467 residues: Cysteine--tRNA ligase (467 aa).

Cys30 is a binding site for Zn(2+). The short motif at 32 to 42 is the 'HIGH' region element; sequence PTVYDDSHLGH. 3 residues coordinate Zn(2+): Cys209, His239, and Glu243. Positions 271-275 match the 'KMSKS' region motif; the sequence is KMSKS. Lys274 provides a ligand contact to ATP.

This sequence belongs to the class-I aminoacyl-tRNA synthetase family. In terms of assembly, monomer. It depends on Zn(2+) as a cofactor.

The protein localises to the cytoplasm. It catalyses the reaction tRNA(Cys) + L-cysteine + ATP = L-cysteinyl-tRNA(Cys) + AMP + diphosphate. The chain is Cysteine--tRNA ligase from Aliarcobacter butzleri (strain RM4018) (Arcobacter butzleri).